A 181-amino-acid polypeptide reads, in one-letter code: Oligoribonuclease (181 aa).

The 164-residue stretch at 8–171 (LIWIDLEMTG…LDIQESIAEL (164 aa)) folds into the Exonuclease domain. Tyr129 is an active-site residue.

This sequence belongs to the oligoribonuclease family.

The protein resides in the cytoplasm. Functionally, 3'-to-5' exoribonuclease specific for small oligoribonucleotides. In Shewanella amazonensis (strain ATCC BAA-1098 / SB2B), this protein is Oligoribonuclease.